A 442-amino-acid chain; its full sequence is Urokinase-type plasminogen activator (442 aa).

The N-terminal stretch at 1-20 (MRVLRACLSLCVLVVSDSKG) is a signal peptide. Residues 29–65 (GASNCGCLNGGKCVSYKYFSNIQRCSCPKKFQGEHCE) enclose the EGF-like domain. Intrachain disulfides connect C33–C41, C35–C53, C55–C64, C72–C153, C93–C135, C124–C148, C179–C310, C220–C236, C228–C299, C324–C393, C356–C372, and C383–C411. Residues 36 to 59 (LNGGKCVSYKYFSNIQRCSCPKKF) form a binds urokinase plasminogen activator surface receptor region. One can recognise a Kringle domain in the interval 72 to 153 (CFEGNGHSYR…LVQECMVPNC (82 aa)). N-linked (GlcNAc...) asparagine glycosylation is present at N152. A connecting peptide region spans residues 154–189 (SGGESHRPAYDGKNPFSTPEKVEFQCGQKALRPRFK). The 246-residue stretch at 190 to 435 (IVGGKSTTIE…FLTWIHTHVG (246 aa)) folds into the Peptidase S1 domain. Active-site charge relay system residues include H235 and D286. S387 serves as the catalytic Charge relay system.

Belongs to the peptidase S1 family. Found in high and low molecular mass forms. Each consists of two chains, A and B. The high molecular mass form contains a long chain A which is cleaved to yield a short chain A. Forms heterodimer with SERPINA5. Binds LRP1B; binding is followed by internalization and degradation. Interacts with MRC2. Interacts with PLAUR. In complex with SERPINE1, interacts with PLAUR/uPAR. Interacts with SORL1 and LRP1, either alone or in complex with SERPINE1; these interactions are abolished in the presence of LRPAP1/RAP. The ternary complex composed of PLAUR-PLAU-PAI1 also interacts with SORLA. Produced as an inactive single-chain protein (pro-uPA or sc-uPA), is processed into the active disulfide-linked two-chain form of PLAU/uPA by a proteolytic event mediated, at least, by TMPRSS4.

It localises to the secreted. It carries out the reaction Specific cleavage of Arg-|-Val bond in plasminogen to form plasmin.. Its activity is regulated as follows. Inhibited by SERPINA5. Inhibited by SERPINE1. Specifically cleaves the zymogen plasminogen to form the active enzyme plasmin. The sequence is that of Urokinase-type plasminogen activator (PLAU) from Sus scrofa (Pig).